Consider the following 305-residue polypeptide: Taste receptor type 2 member 13 (305 aa).

The Extracellular segment spans residues 1–7 (MGSNVYG). The helical transmembrane segment at 8–28 (ILTMVMIAEFVFGNMSNGFIV) threads the bilayer. The Cytoplasmic segment spans residues 29–43 (LINCIDWVRKGTLSS). A helical membrane pass occupies residues 44–64 (IGWILLFLAISRMVLIWEMLI). The Extracellular segment spans residues 65 to 88 (TWIKYMKYSFSFVTGTELRGIMFT). The chain crosses the membrane as a helical span at residues 89-109 (WVISNHFSLWLATILSIFYLL). The Cytoplasmic portion of the chain corresponds to 110 to 128 (KIASFSKPVFLYLKWREKK). A helical transmembrane segment spans residues 129 to 149 (VLLIVLLGNLIFLMLNILQIN). At 150 to 182 (KHIEHWMYQYERNITWSSRVSDFAGFSNLVLLE) the chain is on the extracellular side. Asn162 carries N-linked (GlcNAc...) asparagine glycosylation. The helical transmembrane segment at 183–203 (MIVFSVTPFTVALVSFILLIF) threads the bilayer. Over 204-232 (SLWKHLQKMHLNSRGERDPSTKAHVNALR) the chain is Cytoplasmic. A helical membrane pass occupies residues 233-253 (IMVSFLLLYATYFISFFLSLI). The Extracellular segment spans residues 254 to 262 (PMAHKTRLG). The chain crosses the membrane as a helical span at residues 263–283 (LMFSITVGLFYPSSHSFILIL). Over 284–305 (GHSNLRQASLWVMTYLKCGQKH) the chain is Cytoplasmic.

Belongs to the G-protein coupled receptor T2R family.

It localises to the cell membrane. Receptor that may play a role in the perception of bitterness and is gustducin-linked. May play a role in sensing the chemical composition of the gastrointestinal content. The activity of this receptor may stimulate alpha gustducin, mediate PLC-beta-2 activation and lead to the gating of TRPM5. The protein is Taste receptor type 2 member 13 of Mus musculus (Mouse).